We begin with the raw amino-acid sequence, 190 residues long: 6,7-dimethyl-8-ribityllumazine synthase (190 aa).

5-amino-6-(D-ribitylamino)uracil is bound by residues phenylalanine 23, 61 to 63 (SFE), and 85 to 87 (AVI). 90-91 (QT) contacts (2S)-2-hydroxy-3-oxobutyl phosphate. The Proton donor role is filled by histidine 93. 5-amino-6-(D-ribitylamino)uracil is bound at residue phenylalanine 118. A (2S)-2-hydroxy-3-oxobutyl phosphate-binding site is contributed by arginine 132.

This sequence belongs to the DMRL synthase family.

The catalysed reaction is (2S)-2-hydroxy-3-oxobutyl phosphate + 5-amino-6-(D-ribitylamino)uracil = 6,7-dimethyl-8-(1-D-ribityl)lumazine + phosphate + 2 H2O + H(+). Its pathway is cofactor biosynthesis; riboflavin biosynthesis; riboflavin from 2-hydroxy-3-oxobutyl phosphate and 5-amino-6-(D-ribitylamino)uracil: step 1/2. In terms of biological role, catalyzes the formation of 6,7-dimethyl-8-ribityllumazine by condensation of 5-amino-6-(D-ribitylamino)uracil with 3,4-dihydroxy-2-butanone 4-phosphate. This is the penultimate step in the biosynthesis of riboflavin. In Trichormus variabilis (strain ATCC 29413 / PCC 7937) (Anabaena variabilis), this protein is 6,7-dimethyl-8-ribityllumazine synthase.